A 30-amino-acid chain; its full sequence is Snaclec carinactivase-1 regulatory subunit 14 kDa chain (30 aa).

The C-type lectin domain maps to D1 to C30. The cysteines at positions 2 and 13 are disulfide-linked.

The protein belongs to the snaclec family. As to quaternary structure, heterodimer of a metalloproteinase subunit and a regulatory subunit comprising two polypeptides disulfide-linked (14 kDa and 17 kDa chains). As to expression, expressed by the venom gland.

It localises to the secreted. Functionally, calcium-dependent prothrombin activator. This protein may activate prothrombin via recognition by the regulatory subunit of the calcium ion bound conformation of its gamma-carboxyglutamic acid (GLA) domain, and the subsequent conversion of prothrombin to active thrombin is catalyzed by the catalytic subunit. The protein is Snaclec carinactivase-1 regulatory subunit 14 kDa chain of Echis carinatus (Saw-scaled viper).